The chain runs to 405 residues: Arginine biosynthesis bifunctional protein ArgJ (405 aa).

Substrate contacts are provided by Thr152, Lys178, Thr189, Glu276, Asn400, and Thr405. Thr189 functions as the Nucleophile in the catalytic mechanism.

This sequence belongs to the ArgJ family. In terms of assembly, heterotetramer of two alpha and two beta chains.

It localises to the cytoplasm. The enzyme catalyses N(2)-acetyl-L-ornithine + L-glutamate = N-acetyl-L-glutamate + L-ornithine. It catalyses the reaction L-glutamate + acetyl-CoA = N-acetyl-L-glutamate + CoA + H(+). Its pathway is amino-acid biosynthesis; L-arginine biosynthesis; L-ornithine and N-acetyl-L-glutamate from L-glutamate and N(2)-acetyl-L-ornithine (cyclic): step 1/1. It functions in the pathway amino-acid biosynthesis; L-arginine biosynthesis; N(2)-acetyl-L-ornithine from L-glutamate: step 1/4. Functionally, catalyzes two activities which are involved in the cyclic version of arginine biosynthesis: the synthesis of N-acetylglutamate from glutamate and acetyl-CoA as the acetyl donor, and of ornithine by transacetylation between N(2)-acetylornithine and glutamate. This is Arginine biosynthesis bifunctional protein ArgJ from Pseudomonas putida (strain ATCC 47054 / DSM 6125 / CFBP 8728 / NCIMB 11950 / KT2440).